We begin with the raw amino-acid sequence, 325 residues long: Acetyl-coenzyme A carboxylase carboxyl transferase subunit alpha (325 aa).

Residues 38–292 (RLEERLSKLQ…DGILKETLKS (255 aa)) form the CoA carboxyltransferase C-terminal domain.

This sequence belongs to the AccA family. As to quaternary structure, acetyl-CoA carboxylase is a heterohexamer composed of biotin carboxyl carrier protein (AccB), biotin carboxylase (AccC) and two subunits each of ACCase subunit alpha (AccA) and ACCase subunit beta (AccD).

The protein resides in the cytoplasm. The catalysed reaction is N(6)-carboxybiotinyl-L-lysyl-[protein] + acetyl-CoA = N(6)-biotinyl-L-lysyl-[protein] + malonyl-CoA. It participates in lipid metabolism; malonyl-CoA biosynthesis; malonyl-CoA from acetyl-CoA: step 1/1. Its function is as follows. Component of the acetyl coenzyme A carboxylase (ACC) complex. First, biotin carboxylase catalyzes the carboxylation of biotin on its carrier protein (BCCP) and then the CO(2) group is transferred by the carboxyltransferase to acetyl-CoA to form malonyl-CoA. This Bacillus velezensis (strain DSM 23117 / BGSC 10A6 / LMG 26770 / FZB42) (Bacillus amyloliquefaciens subsp. plantarum) protein is Acetyl-coenzyme A carboxylase carboxyl transferase subunit alpha.